Here is a 145-residue protein sequence, read N- to C-terminus: Lysozyme-like protein 4 (145 aa).

The signal sequence occupies residues 1-19; that stretch reads MQLYLVLLLISYLLTPIGA. Residues 20–145 form the C-type lysozyme domain; it reads SILGRCVVAK…LDRWLDGCEL (126 aa). Disulfide bonds link C25–C143, C49–C130, C84–C95, and C91–C109. E54 is a catalytic residue.

The protein belongs to the glycosyl hydrolase 22 family. As to quaternary structure, monomer. Expressed in the brain, lung, ovary, uterus and testis. In testis expressed in the germinal epithelium and on the maturing spermatozoa (at protein level).

It is found in the secreted. The protein resides in the cytoplasmic vesicle. Its subcellular location is the secretory vesicle. The protein localises to the acrosome. It localises to the cell projection. It is found in the cilium. The protein resides in the flagellum. Functionally, may be involved in fertilization. Has no detectable bacteriolytic and lysozyme activities in vitro. This Rattus norvegicus (Rat) protein is Lysozyme-like protein 4 (Lyzl4).